Reading from the N-terminus, the 607-residue chain is Threonine--tRNA ligase (607 aa).

Residues 1–143 (MRVLYIHAER…SFKPEEARVA (143 aa)) are editing domain. 2 catalytic regions span residues 193–489 (PRYL…PRLP) and 194–489 (RYLD…PRLP). The Zn(2+) site is built by Cys-286, His-337, and His-458.

Belongs to the class-II aminoacyl-tRNA synthetase family. As to quaternary structure, homodimer. The cofactor is Zn(2+).

It localises to the cytoplasm. It carries out the reaction tRNA(Thr) + L-threonine + ATP = L-threonyl-tRNA(Thr) + AMP + diphosphate + H(+). Functionally, catalyzes the attachment of threonine to tRNA(Thr) in a two-step reaction: L-threonine is first activated by ATP to form Thr-AMP and then transferred to the acceptor end of tRNA(Thr). Also edits incorrectly charged L-seryl-tRNA(Thr). This chain is Threonine--tRNA ligase, found in Pyrobaculum calidifontis (strain DSM 21063 / JCM 11548 / VA1).